Consider the following 557-residue polypeptide: MASKQAAAKGKGEKRKRVVLTLKEKIDICTRLERGESRKALMQEYNVGMSTLYDIKAHKAQLLRFFASSDSRQALEQRRTLHTPKLEHLDRVLYEWFLVKRAEGIPVSGPMLIEKAKDFYKQMRLTEPCVFSGGWLWRFKARHGIKKLDASSEKQAADHQAAEQFCGFFRSLAAEHGLSPEQVYSADETGLVWRCLPNSAPDDGTVPHFKQGKDRLTVLMCANATGSHRIKPLAIGKGGGPRAFRGIQHLPIAYKAQGNAWVDKEIFSDWFHHIFVPSVREHFRTIGLPEDSKAILLLDHSRAHSQESELVSENVFTIFLPSSVTSLLQPTEQGIRRAFMRLFINPPVAFQGFPTRHNINDAIVNVARAWNAVPSQVFQRAWRKLWPTVTFTEGSSSEEEAECCAIKPHKTFAHILGLVKEGPTCSGSRLQDSRVEERVVAGRDIDEAPAIVAPSQATRCTKKSEKDTGETEEAAWEQAATSFEALVRFAERQPCFSVQEMGQLQALHTVFRRQQQLRQPRVALRAVIKLEALQEHPGVCVATTHPTLPCSSTAGDN.

Positions 11 to 62 (KGEKRKRVVLTLKEKIDICTRLERGESRKALMQEYNVGMSTLYDIKAHKAQL) constitute an HTH psq-type domain. 2 DNA-binding regions (H-T-H motif) span residues 38–58 (RKALMQEYNVGMSTLYDIKAH) and 110–142 (PMLIEKAKDFYKQMRLTEPCVFSGGWLWRFKAR). Positions 77–149 (QRRTLHTPKL…KARHGIKKLD (73 aa)) constitute an HTH CENPB-type domain. The DDE-1 domain maps to 213-382 (KDRLTVLMCA…VPSQVFQRAW (170 aa)).

The protein belongs to the tigger transposable element derived protein family. Brain; highest in the temporal and brainstem regions.

It localises to the nucleus. May bind DNA. In Mus musculus (Mouse), this protein is Jerky protein.